A 128-amino-acid polypeptide reads, in one-letter code: Sulfurtransferase TusD (128 aa).

The Cysteine persulfide intermediate role is filled by C78.

It belongs to the DsrE/TusD family. As to quaternary structure, heterohexamer, formed by a dimer of trimers. The hexameric TusBCD complex contains 2 copies each of TusB, TusC and TusD. The TusBCD complex interacts with TusE.

It is found in the cytoplasm. Part of a sulfur-relay system required for 2-thiolation of 5-methylaminomethyl-2-thiouridine (mnm(5)s(2)U) at tRNA wobble positions. Accepts sulfur from TusA and transfers it in turn to TusE. The sequence is that of Sulfurtransferase TusD from Enterobacter sp. (strain 638).